The following is a 769-amino-acid chain: Serine protease HtrA-like (769 aa).

Basic residues predominate over residues 1–20; sequence MDIGKKHVIPKSQYRRKRRE. The interval 1-390 is disordered; it reads MDIGKKHVIP…ATSKLNKGRA (390 aa). 2 stretches are compositionally biased toward basic and acidic residues: residues 21–64 and 71–108; these read FFHN…ERFK and LEQR…DVSK. A compositionally biased stretch (polar residues) spans 126-137; sequence YEQNSEATLSTK. Over residues 138 to 186 the composition is skewed to basic and acidic residues; sequence STDKVESTEMRKLSSDKNKVGHEEQHVLSKPSEHDKETRIDSESSRTDS. Residues 247 to 262 are compositionally biased toward polar residues; sequence QQSQNEQTKTYTYGDS. Composition is skewed to basic and acidic residues over residues 264–296 and 310–330; these read QNDK…HIVD and KTDD…HKQN. The segment covering 331-347 has biased composition (polar residues); sequence ADSSETVGYQSQSTASH. Basic and acidic residues predominate over residues 348 to 364; the sequence is RSTEKRNISINDHDKLN. Residues 365 to 390 are compositionally biased toward polar residues; sequence GQKTNTKTSANNNQKKATSKLNKGRA. The helical transmembrane segment at 410–430 threads the bilayer; sequence LVILMGIIILIVILNAIFNNV. Catalysis depends on charge relay system residues histidine 504, aspartate 534, and serine 619. The PDZ domain maps to 680–733; the sequence is IVSLNSFERQAVKLPGKVKNGVVVDQVDNNGLADQSGLKKGDVITELDGKLLED.

The protein belongs to the peptidase S1C family.

The protein localises to the cell membrane. In Staphylococcus aureus (strain NCTC 8325 / PS 47), this protein is Serine protease HtrA-like.